The chain runs to 133 residues: Small ribosomal subunit protein uS9 (133 aa).

Belongs to the universal ribosomal protein uS9 family.

The sequence is that of Small ribosomal subunit protein uS9 from Ureaplasma parvum serovar 3 (strain ATCC 700970).